We begin with the raw amino-acid sequence, 353 residues long: Phosphate acyltransferase (353 aa).

This sequence belongs to the PlsX family. Homodimer. Probably interacts with PlsY.

It is found in the cytoplasm. The enzyme catalyses a fatty acyl-[ACP] + phosphate = an acyl phosphate + holo-[ACP]. It participates in lipid metabolism; phospholipid metabolism. Its function is as follows. Catalyzes the reversible formation of acyl-phosphate (acyl-PO(4)) from acyl-[acyl-carrier-protein] (acyl-ACP). This enzyme utilizes acyl-ACP as fatty acyl donor, but not acyl-CoA. The polypeptide is Phosphate acyltransferase (Bradyrhizobium diazoefficiens (strain JCM 10833 / BCRC 13528 / IAM 13628 / NBRC 14792 / USDA 110)).